The following is an 801-amino-acid chain: Heavy metal tolerance factor 1 (801 aa).

Residues 1-24 lie on the Lumenal side of the membrane; it reads MGFSPFLDECRAEGLWPIGPSCNK. Residues 25–45 traverse the membrane as a helical segment; the sequence is IISFGVYTFFIVVNFIVLCIP. Residues 46–75 lie on the Cytoplasmic side of the membrane; that stretch reads NSNSANNNYRRMTDDDASSTSKLTISKILS. A helical transmembrane segment spans residues 76–96; that stretch reads ICTIFAVICQSIFYFCFTFYF. Topologically, residues 97–101 are lumenal; the sequence is HPYTH. A helical membrane pass occupies residues 102–122; it reads LLLAFCVSKLFFWILSLCSFS. Over 123 to 129 the chain is Cytoplasmic; sequence KWRNQPS. A helical transmembrane segment spans residues 130-150; sequence TPISLAFAFSAALLIHCIPLT. Over 151–167 the chain is Lumenal; the sequence is DWKKYFEPTSKNRGDLT. A helical membrane pass occupies residues 168 to 188; it reads FYIIELALVTVVFFFTIVTGL. Residues 189 to 226 lie on the Cytoplasmic side of the membrane; the sequence is FNFSGCSSRESAWNNLSKKVVTVAPYIWPTKSISLQLR. A helical transmembrane segment spans residues 227-247; the sequence is VVFCLFLLIIGRLINVSLPIL. Residues 227–516 enclose the ABC transmembrane type-1 domain; that stretch reads VVFCLFLLII…FGTIYRVIQK (290 aa). Residues 248 to 264 lie on the Lumenal side of the membrane; that stretch reads SKWIVDELATPDTFQYS. Residues 265-285 traverse the membrane as a helical segment; the sequence is LLFLATFLKFLQGNGAMGGFL. The Cytoplasmic segment spans residues 286–341; that stretch reads NTVRTYLWIPIQQYTTRELEVELFKHLHSLSLRWHLSRKTGQVLRVMDRGTSSVNN. A helical membrane pass occupies residues 342-364; that stretch reads ILNYILFNVVPTIADIVIAVIFF. The Lumenal segment spans residues 365-371; sequence FSAFNAY. A helical membrane pass occupies residues 372-390; that stretch reads FGLIVFGTMALYLTVTISI. Topologically, residues 391 to 461 are cytoplasmic; it reads TEWRTQYIRE…SLAFLNCLQN (71 aa). Residues 462-482 traverse the membrane as a helical segment; it reads AIIGIGMIGGSVFVVYMIVHE. Topologically, residues 483 to 489 are lumenal; that stretch reads KTLTVGD. A helical membrane pass occupies residues 490-510; the sequence is YVLFTTYLLQLYTPLNFFGTI. Residues 511–801 lie on the Cytoplasmic side of the membrane; it reads YRVIQKAFVD…KSIELGEELP (291 aa). In terms of domain architecture, ABC transporter spans 550–784; sequence ISVKNLTFEY…QGTYASMWEA (235 aa). 583–590 lines the ATP pocket; that stretch reads GSSGSGKS.

The protein belongs to the ABC transporter superfamily. ABCB family. Heavy Metal importer (TC 3.A.1.210) subfamily. Expressed in coelomocytes, as well as in head and tail neurons, and in the intestinal cells.

Its subcellular location is the vacuole membrane. It localises to the early endosome. The protein resides in the late endosome. It is found in the recycling endosome. Functionally, may play a pivotal role in the detoxification of heavy metals such as cadmium but do not depend exclusively on phytochelatins (PC) synthesis. This chain is Heavy metal tolerance factor 1, found in Caenorhabditis elegans.